The primary structure comprises 186 residues: MSEGVDLKELKRRMDGAISAFKHDIASLRTGRASANVLDPVTVEAYGSRMPLNQVANITVPEARMLSVSVWDKSMVGAVERAIRESNLGLNPIVDGQNLRIPLPELNEERRKSLVKVAHDYAEKSKVAVRHVRRDGMDDLKKAEKDGEIGQDESRAQSERVQKMTDDVISEIDRLLADKEKEIMQV.

The disordered stretch occupies residues 135 to 164 (DGMDDLKKAEKDGEIGQDESRAQSERVQKM).

It belongs to the RRF family.

The protein resides in the cytoplasm. Functionally, responsible for the release of ribosomes from messenger RNA at the termination of protein biosynthesis. May increase the efficiency of translation by recycling ribosomes from one round of translation to another. The protein is Ribosome-recycling factor of Sinorhizobium medicae (strain WSM419) (Ensifer medicae).